A 151-amino-acid polypeptide reads, in one-letter code: Probable cGMP 3',5'-cyclic phosphodiesterase subunit delta (151 aa).

Belongs to the PDE6D/unc-119 family. Interacts with Pde6.

The protein resides in the nucleus. Its subcellular location is the cytoplasm. The sequence is that of Probable cGMP 3',5'-cyclic phosphodiesterase subunit delta from Drosophila persimilis (Fruit fly).